Here is a 711-residue protein sequence, read N- to C-terminus: Taperin (711 aa).

Disordered regions lie at residues 134 to 305 (SRLL…APKP), 328 to 384 (RNSF…LGKS), and 414 to 438 (QRPS…GLRV). Over residues 157–180 (PPPPPPPPAPPRPPPAAPSPPAAP) the composition is skewed to pro residues. The span at 197–206 (LQKTGSNSFT) shows a compositional bias: polar residues. Serine 241 carries the post-translational modification Phosphoserine. Over residues 267–282 (TPSATPASPPASATPS) the composition is skewed to low complexity. Polar residues predominate over residues 283–296 (QRQCVSAATSTNDS). Phosphoserine occurs at positions 362, 418, and 463. Disordered stretches follow at residues 500 to 535 (TFTV…EEAS), 572 to 630 (SRKK…EKPF), 642 to 662 (SVRP…SYTP), and 674 to 711 (QALE…ALYF). 2 stretches are compositionally biased toward polar residues: residues 512–521 (LQDQHFSQAN) and 581–590 (NDKSLQTTFE). Residues 597–624 (LEQEEEVDQQEEEEEEEEEEEEEEEGSG) are compositionally biased toward acidic residues.

The protein belongs to the taperin family. In terms of assembly, interacts with GRXCR2; the interaction restricts TPRN to the stereocilum basal region. Interacts with actin ACTB; the interaction may stabilize stereocilia. Interacts with CLIC5. Interacts with PTPRQ. TPRN, CLIC5 and PTPQR form concentric rings at the base of stereocilia and may form a complex. Interacts with phosphatase PPP1CA; the interaction results in inhibition of PPC1A phosphatase activity. Interacts with DNA damage response proteins XRCC6/KU70, XRCC5/KU80, PARP1, TOP1 and TOP2A; these interactions recruit TPRN to sites of DNA damage where it may play a role in DNA repair. In terms of tissue distribution, expression is detected in fetal cochlea.

It is found in the cell projection. The protein resides in the stereocilium. It localises to the microvillus. Its subcellular location is the nucleus. The protein localises to the nucleoplasm. It is found in the cytoplasm. Functionally, essential for hearing. Required for maintenance of stereocilia on both inner and outer hair cells. Necessary for the integrity of the stereociliary rootlet. May act as an actin cytoskeleton regulator involved in the regulation of actin dynamics at the pointed end in hair cells. Forms rings at the base of stereocilia and binds actin filaments in the stereocilia which may stabilize the stereocilia. Acts as a strong inhibitor of PPP1CA phosphatase activity. Recruited to sites of DNA damage and may play a role in DNA damage repair. This Homo sapiens (Human) protein is Taperin (TPRN).